The primary structure comprises 209 residues: GTP cyclohydrolase 1 (209 aa).

The Zn(2+) site is built by cysteine 89, histidine 92, and cysteine 163.

It belongs to the GTP cyclohydrolase I family. Toroid-shaped homodecamer, composed of two pentamers of five dimers.

The catalysed reaction is GTP + H2O = 7,8-dihydroneopterin 3'-triphosphate + formate + H(+). The protein operates within cofactor biosynthesis; 7,8-dihydroneopterin triphosphate biosynthesis; 7,8-dihydroneopterin triphosphate from GTP: step 1/1. This chain is GTP cyclohydrolase 1, found in Sulfolobus acidocaldarius (strain ATCC 33909 / DSM 639 / JCM 8929 / NBRC 15157 / NCIMB 11770).